The following is a 301-amino-acid chain: Ribosome-inactivating protein (301 aa).

Positions 1-16 (MAEITLEPSDLMAQTN) are cleaved as a propeptide — or 12 (in 10% of the molecules). The propeptide occupies 162–186 (MATLEEEEVKMQMQMPEAADLAAAA). The active site involves Glu207. The propeptide occupies 258-301 (VIPDMQKLGIKDKNEAARIVALVKNQTTAAAATAASADNDDDEA).

It belongs to the ribosome-inactivating protein family. Type 1 RIP subfamily. In terms of assembly, synthesized and stored in the kernel as a 34 kDa inactive precursor. During germination, this neutral precursor is converted into a basic, active form by limited proteolysis, which removes 25 AA of net charge -6 from the center of the polypeptide chain. Additional processing also occurs at the N- and C-termini of the polypeptide. A two-chain active RIP (comprised of 16.5 and 8.5 kDa fragments that remain tightly associated) is produced from this processing event.

The catalysed reaction is Endohydrolysis of the N-glycosidic bond at one specific adenosine on the 28S rRNA.. Its function is as follows. Potent catalytic inactivator of eukaryotic protein synthesis. It may be a component of natural defense mechanisms involved in protecting the kernel against soil-borne fungal infections. This Zea mays (Maize) protein is Ribosome-inactivating protein.